The primary structure comprises 144 residues: Bacilliredoxin SH1478 (144 aa).

The protein belongs to the bacilliredoxin family.

The protein is Bacilliredoxin SH1478 of Staphylococcus haemolyticus (strain JCSC1435).